Reading from the N-terminus, the 858-residue chain is DNA mismatch repair protein MutS (858 aa).

Residue 613–620 (GPNMAGKS) coordinates ATP.

This sequence belongs to the DNA mismatch repair MutS family.

Its function is as follows. This protein is involved in the repair of mismatches in DNA. It is possible that it carries out the mismatch recognition step. This protein has a weak ATPase activity. This Dehalococcoides mccartyi (strain ATCC BAA-2100 / JCM 16839 / KCTC 5957 / BAV1) protein is DNA mismatch repair protein MutS.